The primary structure comprises 187 residues: Large ribosomal subunit protein uL22 (187 aa).

The segment at 155–187 is disordered; sequence DAVSRAAPTDDAPAKKKLSKKKLARQKEKMMRE. Over residues 169–178 the composition is skewed to basic residues; it reads KKKLSKKKLA.

This sequence belongs to the universal ribosomal protein uL22 family.

This Lonomia obliqua (Moth) protein is Large ribosomal subunit protein uL22 (RpL17).